The following is a 711-amino-acid chain: MKQLFATTSRGFEELLKVELTELGAQEAKVVQGGVHYQADDETLYRTLLWSRLASRILFPLIETKIYSDLDLYAAVSGFNWLAQFDERVTFFVDFNGTNQEIRHTQFGAMRVKDGIVDYFERQGKTRPDVDKIQPDVRIHAYLNRENLVISLDLSGEALHLRGYREDAGQAPLRETLAAAIVMRSGWQVGSPLVDPMCGSGTLLIEAAQMEAKIAPQLYRLHWGFDFWKAHNQSAWEKVKNEAIELAEEKQREIQPHFYGFDLDHRVLKKAQKNAQNAGVSHLIKWQQADVAALKNPRLNEVGTVICNPPYGERLGTTPALIALYSVFGQRLKKEFCGWNVSVFSSESTLLDCLRMRASRQFKAKNGPLDCVQKNYQVSERKSDAITDEKELEFNRTSEVAPDFANRLQKNIKKISKWAKQQELDAYRLYDADLPEYNLAVDRYADYIVVQEYAAPKNIDENKARQRLLDAVTATLQVTGVETNKLILKVRQKQKGTNQYEKLANKGEYFYVNEYGTQLWVNLTDYLDTGLFLDHRLTRKMIGELAKGKDFLNLFAYTGSATVHAALGGAKSTTTVDMSNTYLNWAEQNLILNDIEGKQHKLIQADCLQWLEKCDRQFDLIFADPPTFSNSKRMEESWDVQRDHVKLMRNLKRVLSNNGTIVFSNNKRGFKMNLVALEELGLSAIEISHKTLPLDFERNKQIHNCWMIQHI.

Positions 43 to 154 (TLYRTLLWSR…RENLVISLDL (112 aa)) constitute a THUMP domain.

Belongs to the methyltransferase superfamily. RlmKL family.

It is found in the cytoplasm. The enzyme catalyses guanosine(2445) in 23S rRNA + S-adenosyl-L-methionine = N(2)-methylguanosine(2445) in 23S rRNA + S-adenosyl-L-homocysteine + H(+). It catalyses the reaction guanosine(2069) in 23S rRNA + S-adenosyl-L-methionine = N(2)-methylguanosine(2069) in 23S rRNA + S-adenosyl-L-homocysteine + H(+). Functionally, specifically methylates the guanine in position 2445 (m2G2445) and the guanine in position 2069 (m7G2069) of 23S rRNA. The sequence is that of Ribosomal RNA large subunit methyltransferase K/L from Haemophilus influenzae (strain ATCC 51907 / DSM 11121 / KW20 / Rd).